Consider the following 94-residue polypeptide: Protein RnfH (94 aa).

Belongs to the UPF0125 (RnfH) family.

The protein is Protein RnfH of Yersinia pestis bv. Antiqua (strain Antiqua).